Reading from the N-terminus, the 526-residue chain is tRNA-2-methylthio-N(6)-dimethylallyladenosine synthase (526 aa).

Positions 1-24 are disordered; that stretch reads MTQQLNHAKVNQHPGQATLPETAE. An MTTase N-terminal domain is found at 28–144; the sequence is RTYEVKTYGC…LPTLLQRAEH (117 aa). [4Fe-4S] cluster contacts are provided by C37, C73, C107, C181, C185, and C188. One can recognise a Radical SAM core domain in the interval 167 to 403; sequence RESAYAGWVS…MVVQEQVCEE (237 aa). Positions 406–477 constitute a TRAM domain; it reads QKLIGTTVEL…PFFLIADSGV (72 aa).

It belongs to the methylthiotransferase family. MiaB subfamily. Monomer. [4Fe-4S] cluster is required as a cofactor.

Its subcellular location is the cytoplasm. The enzyme catalyses N(6)-dimethylallyladenosine(37) in tRNA + (sulfur carrier)-SH + AH2 + 2 S-adenosyl-L-methionine = 2-methylsulfanyl-N(6)-dimethylallyladenosine(37) in tRNA + (sulfur carrier)-H + 5'-deoxyadenosine + L-methionine + A + S-adenosyl-L-homocysteine + 2 H(+). Functionally, catalyzes the methylthiolation of N6-(dimethylallyl)adenosine (i(6)A), leading to the formation of 2-methylthio-N6-(dimethylallyl)adenosine (ms(2)i(6)A) at position 37 in tRNAs that read codons beginning with uridine. This is tRNA-2-methylthio-N(6)-dimethylallyladenosine synthase from Corynebacterium glutamicum (strain R).